A 399-amino-acid chain; its full sequence is Alpha-tubulin N-acetyltransferase (399 aa).

The region spanning 1–178 is the N-acetyltransferase domain; that stretch reads MEFNFIINKL…NNFVVFDQYF (178 aa). Acetyl-CoA is bound by residues 112–125 and 148–157; these read FYVH…GYGK and SPKLIAFLKK. Residues 183 to 193 are compositionally biased toward polar residues; the sequence is SSQNKQNQNTR. Residues 183-223 are disordered; sequence SSQNKQNQNTRSYSQPYSDYSSQIPTNYPQQQQQQSNSKSY. The segment covering 194-223 has biased composition (low complexity); the sequence is SYSQPYSDYSSQIPTNYPQQQQQQSNSKSY.

The protein belongs to the acetyltransferase ATAT1 family.

It catalyses the reaction L-lysyl-[alpha-tubulin] + acetyl-CoA = N(6)-acetyl-L-lysyl-[alpha-tubulin] + CoA + H(+). Specifically acetylates 'Lys-40' in alpha-tubulin on the lumenal side of microtubules. Promotes microtubule destabilization and accelerates microtubule dynamics; this activity may be independent of acetylation activity. Acetylates alpha-tubulin with a slow enzymatic rate, due to a catalytic site that is not optimized for acetyl transfer. Enters the microtubule through each end and diffuses quickly throughout the lumen of microtubules. Acetylates only long/old microtubules because of its slow acetylation rate since it does not have time to act on dynamically unstable microtubules before the enzyme is released. In Tetrahymena thermophila (strain SB210), this protein is Alpha-tubulin N-acetyltransferase.